A 226-amino-acid polypeptide reads, in one-letter code: MKAIRIAIDGPASSGKSTVAKIIAKNLGYTYLDTGAMYRSATYIALKNGYHKEDVNLILQELAERPISFKKAADGSQLVFLGDQDVTMAIRQNDVTNNVSWVSALPEIREELVKQQRRIARTGAIIMDGRDIGTVVLPDAELKIFLIASVEERAQRRYQENIEKGIATDFDTLKTEIAARDYKDSHRQVSPLKAADDAIIFDTTGITISAVVQFIQEKAEKIIDMA.

10-18 (GPASSGKST) lines the ATP pocket.

This sequence belongs to the cytidylate kinase family. Type 1 subfamily.

It localises to the cytoplasm. The catalysed reaction is CMP + ATP = CDP + ADP. The enzyme catalyses dCMP + ATP = dCDP + ADP. In Streptococcus equi subsp. zooepidemicus (strain MGCS10565), this protein is Cytidylate kinase.